Reading from the N-terminus, the 85-residue chain is Progonadoliberin-2 (85 aa).

The signal sequence occupies residues 1–23; sequence MCVSRLVLLFGLLLCVGAQLSNA. Gln24 carries the pyrrolidone carboxylic acid modification. Gly33 carries the glycine amide modification.

Belongs to the GnRH family.

The protein resides in the secreted. Functionally, stimulates the secretion of gonadotropins. This chain is Progonadoliberin-2 (gnrh2), found in Morone saxatilis (Striped bass).